The chain runs to 638 residues: Signal recognition particle receptor subunit alpha (638 aa).

3 disordered regions span residues 129–205 (KIRA…VELS), 218–245 (IQKH…KKAP), and 262–315 (SAPT…ATKG). Composition is skewed to basic and acidic residues over residues 137-146 (KKFEDSEKAK) and 153-165 (IETR…EKAK). Phosphoserine is present on Ser-177. Residues 218–239 (IQKHGRGLEKSSKSTKSDAPKE) show a composition bias toward basic and acidic residues. Position 284 is a phosphothreonine (Thr-284). A phosphoserine mark is found at Ser-296, Ser-297, and Ser-298. Over residues 304–314 (AQNASKPSATK) the composition is skewed to polar residues. Residues 419–636 (YVVTFCGVNG…NAKAVVAALM (218 aa)) form an NG domain region. Position 425–432 (425–432 (GVNGVGKS)) interacts with GTP. Phosphoserine is present on Ser-473. 520-524 (DTAGR) contacts GTP. Thr-578 carries the post-translational modification Phosphothreonine. 588–591 (TKFD) is a binding site for GTP.

The protein belongs to the GTP-binding SRP family. As to quaternary structure, heterodimer with SRPRB. Interacts with the signal recognition particle (SRP) complex subunit SRP54.

It is found in the endoplasmic reticulum membrane. Functionally, component of the SRP (signal recognition particle) receptor. Ensures, in conjunction with the signal recognition particle, the correct targeting of the nascent secretory proteins to the endoplasmic reticulum membrane system. Forms a guanosine 5'-triphosphate (GTP)-dependent complex with the SRP subunit SRP54. SRP receptor compaction and GTPase rearrangement drive SRP-mediated cotranslational protein translocation into the ER. The polypeptide is Signal recognition particle receptor subunit alpha (Canis lupus familiaris (Dog)).